We begin with the raw amino-acid sequence, 617 residues long: Dihydroxy-acid dehydratase (617 aa).

Asp-81 contacts Mg(2+). Position 122 (Cys-122) interacts with [2Fe-2S] cluster. 2 residues coordinate Mg(2+): Asp-123 and Lys-124. Lys-124 is subject to N6-carboxylysine. [2Fe-2S] cluster is bound at residue Cys-197. Glu-494 is a binding site for Mg(2+). Ser-520 (proton acceptor) is an active-site residue.

The protein belongs to the IlvD/Edd family. As to quaternary structure, homodimer. It depends on [2Fe-2S] cluster as a cofactor. Mg(2+) is required as a cofactor.

It catalyses the reaction (2R)-2,3-dihydroxy-3-methylbutanoate = 3-methyl-2-oxobutanoate + H2O. The catalysed reaction is (2R,3R)-2,3-dihydroxy-3-methylpentanoate = (S)-3-methyl-2-oxopentanoate + H2O. It participates in amino-acid biosynthesis; L-isoleucine biosynthesis; L-isoleucine from 2-oxobutanoate: step 3/4. Its pathway is amino-acid biosynthesis; L-valine biosynthesis; L-valine from pyruvate: step 3/4. Functionally, functions in the biosynthesis of branched-chain amino acids. Catalyzes the dehydration of (2R,3R)-2,3-dihydroxy-3-methylpentanoate (2,3-dihydroxy-3-methylvalerate) into 2-oxo-3-methylpentanoate (2-oxo-3-methylvalerate) and of (2R)-2,3-dihydroxy-3-methylbutanoate (2,3-dihydroxyisovalerate) into 2-oxo-3-methylbutanoate (2-oxoisovalerate), the penultimate precursor to L-isoleucine and L-valine, respectively. The chain is Dihydroxy-acid dehydratase from Parafrankia sp. (strain EAN1pec).